The primary structure comprises 87 residues: Cell division topological specificity factor (87 aa).

The protein belongs to the MinE family.

Functionally, prevents the cell division inhibition by proteins MinC and MinD at internal division sites while permitting inhibition at polar sites. This ensures cell division at the proper site by restricting the formation of a division septum at the midpoint of the long axis of the cell. This Roseiflexus sp. (strain RS-1) protein is Cell division topological specificity factor.